Here is a 118-residue protein sequence, read N- to C-terminus: Large ribosomal subunit protein uL18 (118 aa).

The protein belongs to the universal ribosomal protein uL18 family. As to quaternary structure, part of the 50S ribosomal subunit; part of the 5S rRNA/L5/L18/L25 subcomplex. Contacts the 5S and 23S rRNAs.

This is one of the proteins that bind and probably mediate the attachment of the 5S RNA into the large ribosomal subunit, where it forms part of the central protuberance. This Dichelobacter nodosus (strain VCS1703A) protein is Large ribosomal subunit protein uL18.